The following is a 299-amino-acid chain: MKPDAHQVKQFLLNLQDTICQQLSAVDGAEFVEDSWLREAGGGGRSRVLRNGGVFEQAGVNFSHVHGEVMPASATAHRPELAGRSFEAMGVSLVVHPHNPYVPTSHANVRFFIAEKPGAEPVWWFGGGFDLTPFYGFEEDAIHWHRTARDLCQPFGEDVYPRYKKWCDEYFYLKHRNEQRGIGGLFFDDLNTPDFDHCFAFMQAVGKGYTNAYLPIVERRKTMAYGERERNFQLYRRGRYVEFNLVWDRGTLFGLQTGGRTESILMSMPPLVRWEYDYQPKDGSPEAALNEFIKVRDWV.

Ser-92 contributes to the substrate binding site. Mn(2+) is bound by residues His-96 and His-106. Catalysis depends on His-106, which acts as the Proton donor. 108–110 provides a ligand contact to substrate; it reads NVR. Residues His-145 and His-175 each contribute to the Mn(2+) site. The important for dimerization stretch occupies residues 240–275; it reads YVEFNLVWDRGTLFGLQTGGRTESILMSMPPLVRWE. 258–260 serves as a coordination point for substrate; the sequence is GGR.

It belongs to the aerobic coproporphyrinogen-III oxidase family. As to quaternary structure, homodimer. It depends on Mn(2+) as a cofactor.

The protein localises to the cytoplasm. The enzyme catalyses coproporphyrinogen III + O2 + 2 H(+) = protoporphyrinogen IX + 2 CO2 + 2 H2O. The protein operates within porphyrin-containing compound metabolism; protoporphyrin-IX biosynthesis; protoporphyrinogen-IX from coproporphyrinogen-III (O2 route): step 1/1. Its function is as follows. Involved in the heme biosynthesis. Catalyzes the aerobic oxidative decarboxylation of propionate groups of rings A and B of coproporphyrinogen-III to yield the vinyl groups in protoporphyrinogen-IX. This Escherichia coli (strain SMS-3-5 / SECEC) protein is Oxygen-dependent coproporphyrinogen-III oxidase.